Here is a 147-residue protein sequence, read N- to C-terminus: Plasminogen receptor (KT) (147 aa).

Topologically, residues 1–52 are extracellular; sequence MGFIFSKSMNESMKNQKEFMLMNARLQLERQLIMQSEMRERQMAMQIAWSRE. The helical transmembrane segment at 53-73 threads the bilayer; that stretch reads FLKYFGTFFGLAAISLTAGAI. Topologically, residues 74–78 are cytoplasmic; sequence KKKKP. Residues 79–99 form a helical membrane-spanning segment; sequence AFLVPIVPLSFILTYQYDLGY. The Extracellular portion of the chain corresponds to 100–147; the sequence is GTLLERMKGEAEDILETEKSKLQLPRGMITFESIEKARKEQSRFFIDK.

Interacts with PLAT and PLAUR. As to expression, expressed in peripheral blood cells and monocytes. Expressed in adrenal medulla.

The protein localises to the cell membrane. Functionally, receptor for plasminogen. Regulates urokinase plasminogen activator-dependent and stimulates tissue-type plasminogen activator-dependent cell surface plasminogen activation. Proposed to be part of a local catecholaminergic cell plasminogen activation system that regulates neuroendocrine prohormone processing. Involved in regulation of inflammatory response; regulates monocyte chemotactic migration and matrix metalloproteinase activation, such as of MMP2 and MMP9. The sequence is that of Plasminogen receptor (KT) (PLGRKT) from Homo sapiens (Human).